Reading from the N-terminus, the 275-residue chain is 4-hydroxy-3-methylbut-2-enyl diphosphate reductase (275 aa).

[4Fe-4S] cluster is bound at residue Cys-12. Residues His-36 and His-70 each contribute to the (2E)-4-hydroxy-3-methylbut-2-enyl diphosphate site. Residues His-36 and His-70 each contribute to the dimethylallyl diphosphate site. Isopentenyl diphosphate-binding residues include His-36 and His-70. Cys-92 serves as a coordination point for [4Fe-4S] cluster. Position 120 (His-120) interacts with (2E)-4-hydroxy-3-methylbut-2-enyl diphosphate. His-120 contacts dimethylallyl diphosphate. His-120 lines the isopentenyl diphosphate pocket. Catalysis depends on Glu-122, which acts as the Proton donor. (2E)-4-hydroxy-3-methylbut-2-enyl diphosphate is bound at residue Thr-158. Cys-186 serves as a coordination point for [4Fe-4S] cluster. Ser-214, Ser-215, Asn-216, and Ser-258 together coordinate (2E)-4-hydroxy-3-methylbut-2-enyl diphosphate. The dimethylallyl diphosphate site is built by Ser-214, Ser-215, Asn-216, and Ser-258. Positions 214, 215, 216, and 258 each coordinate isopentenyl diphosphate.

This sequence belongs to the IspH family. The cofactor is [4Fe-4S] cluster.

The enzyme catalyses isopentenyl diphosphate + 2 oxidized [2Fe-2S]-[ferredoxin] + H2O = (2E)-4-hydroxy-3-methylbut-2-enyl diphosphate + 2 reduced [2Fe-2S]-[ferredoxin] + 2 H(+). It catalyses the reaction dimethylallyl diphosphate + 2 oxidized [2Fe-2S]-[ferredoxin] + H2O = (2E)-4-hydroxy-3-methylbut-2-enyl diphosphate + 2 reduced [2Fe-2S]-[ferredoxin] + 2 H(+). It functions in the pathway isoprenoid biosynthesis; dimethylallyl diphosphate biosynthesis; dimethylallyl diphosphate from (2E)-4-hydroxy-3-methylbutenyl diphosphate: step 1/1. The protein operates within isoprenoid biosynthesis; isopentenyl diphosphate biosynthesis via DXP pathway; isopentenyl diphosphate from 1-deoxy-D-xylulose 5-phosphate: step 6/6. Its function is as follows. Catalyzes the conversion of 1-hydroxy-2-methyl-2-(E)-butenyl 4-diphosphate (HMBPP) into a mixture of isopentenyl diphosphate (IPP) and dimethylallyl diphosphate (DMAPP). Acts in the terminal step of the DOXP/MEP pathway for isoprenoid precursor biosynthesis. This is 4-hydroxy-3-methylbut-2-enyl diphosphate reductase from Campylobacter hominis (strain ATCC BAA-381 / DSM 21671 / CCUG 45161 / LMG 19568 / NCTC 13146 / CH001A).